We begin with the raw amino-acid sequence, 173 residues long: Protein-export protein SecB (173 aa).

It belongs to the SecB family. Homotetramer, a dimer of dimers. One homotetramer interacts with 1 SecA dimer.

The protein localises to the cytoplasm. Its function is as follows. One of the proteins required for the normal export of preproteins out of the cell cytoplasm. It is a molecular chaperone that binds to a subset of precursor proteins, maintaining them in a translocation-competent state. It also specifically binds to its receptor SecA. The sequence is that of Protein-export protein SecB from Ralstonia nicotianae (strain ATCC BAA-1114 / GMI1000) (Ralstonia solanacearum).